Consider the following 1063-residue polypeptide: MTTEDDDQMLGPSGTQEKIYVSVRMRPLNDKEKFRNDVPDWECINNTTIIYRSHLSISERSMYPSAYTFDRVFSPECCTRQVYEQGAKEVAFSVVSGVNASVFAYGQTSSGKTYTMSGITDCALVDIYGYIDKHKEREFILKFSAMEIYNESVRDLLSTDTSPLRLLDDPEKGTVVEKLTEETLRDWNHFKELLSVCKAQRQIGETALNEVSSRSHQILRLTVESIAREFSTNDKFSTLTATVNFIDLAGSERASQSLSAGTRLKEGCHINRSLLTLGTVIRKLSKEKTGHIPFRDSKLTRILQSSLGGNARTAIICTMSPARIHVEQSRNTLLFASCAKEVTTNAQVNVVMSDKALVKHLQRELAKLESELRSPSQASIVSDTTALLTEKDLEVEKLKKEVFQLAQQLEQARSEIKDLRRMVEEEKNQEKETLSTETEGLNVLMEHQYPKLRVRRTWDSENTTPLSPISAHRSSISPRSTEYSYEENVFQLSDFRIDSASSSPQQLAFVTPFLKVPLDDIHVTDTVDQSHVHKEEAIEEPHVQEERFYEMAEHTDGNSEDNCREVRCIETEKSDISIGPVENMPESSPDKYEAVTAEEPVSVTEPKNLQHPTEEAVCVTETKNLQHPTEAENEEEEEEERVKEVSGASPEPKQESNLTKNPALCDLECSPDEFDTSMSNLSRISTPPALITPSPEKPFSWIMERDSQLFRGMKLTRSRSCRPSLLSSPSSSWLEKDADTPPSWYDKEFIKTAERNLTMCDIKNQRLLQDEFSGRSMPTTWFERSLSDTQTVDAASHGVSNEMSPNESPFRPSDASVFELQTSGRASISQDRTEETAAQKDKQIIHRSMEEREQKFLASNSTKSFKDAAMDPIQDYLDTALNWPVEFKRLQREIIELWHVCKVSMAHRSYFFLLFRGDQKDCLYLEVELRRLKYIRESFAQNSNDGNNMTLISCTRALTRERYKLSKLMQRKLSKEERENLFLRWGIGLNTNHRRVQLARRLWSDYKDMGHVRESASLVGKLNGFVDMKLTSTEMFGVNYAFRPPRPKKSSLWKRSVLSLSFL.

The region spanning 18–342 (KIYVSVRMRP…LLFASCAKEV (325 aa)) is the Kinesin motor domain. Residue 106 to 113 (GQTSSGKT) coordinates ATP. A coiled-coil region spans residues 351–436 (VMSDKALVKH…KNQEKETLST (86 aa)). Residues 574–664 (SDISIGPVEN…ESNLTKNPAL (91 aa)) are disordered.

The protein belongs to the TRAFAC class myosin-kinesin ATPase superfamily. Kinesin family. KIN-7 subfamily.

This chain is Kinesin-like protein KIN-7H, found in Arabidopsis thaliana (Mouse-ear cress).